A 509-amino-acid polypeptide reads, in one-letter code: 2,3-bisphosphoglycerate-independent phosphoglycerate mutase (509 aa).

A Mn(2+)-binding site is contributed by Asp-11. A Phosphotyrosine modification is found at Tyr-35. Ser-61 provides a ligand contact to Mn(2+). The active-site Phosphoserine intermediate is Ser-61. Substrate-binding positions include His-122, 152–153 (RD), Arg-184, Arg-190, 260–263 (RPDR), and Lys-335. Residues Asp-402, His-406, Asp-443, His-444, and His-461 each contribute to the Mn(2+) site.

This sequence belongs to the BPG-independent phosphoglycerate mutase family. As to quaternary structure, monomer. Mn(2+) serves as cofactor.

It carries out the reaction (2R)-2-phosphoglycerate = (2R)-3-phosphoglycerate. It functions in the pathway carbohydrate degradation; glycolysis; pyruvate from D-glyceraldehyde 3-phosphate: step 3/5. Functionally, essential for rapid growth and for sporulation. Catalyzes the interconversion of 2-phosphoglycerate and 3-phosphoglycerate. The sequence is that of 2,3-bisphosphoglycerate-independent phosphoglycerate mutase from Bacillus cereus (strain ATCC 14579 / DSM 31 / CCUG 7414 / JCM 2152 / NBRC 15305 / NCIMB 9373 / NCTC 2599 / NRRL B-3711).